Here is a 166-residue protein sequence, read N- to C-terminus: NAD(P)H-quinone oxidoreductase subunit I, chloroplastic (166 aa).

2 4Fe-4S ferredoxin-type domains span residues 55-84 (GRIHFEFDKCIACEVCVRVCPIDLPVVDWK) and 95-124 (LNYSIDFGICIFCGNCVEYCPTNCLSMTEE). Positions 64, 67, 70, 74, 104, 107, 110, and 114 each coordinate [4Fe-4S] cluster.

The protein belongs to the complex I 23 kDa subunit family. In terms of assembly, NDH is composed of at least 16 different subunits, 5 of which are encoded in the nucleus. It depends on [4Fe-4S] cluster as a cofactor.

It localises to the plastid. It is found in the chloroplast thylakoid membrane. The catalysed reaction is a plastoquinone + NADH + (n+1) H(+)(in) = a plastoquinol + NAD(+) + n H(+)(out). It catalyses the reaction a plastoquinone + NADPH + (n+1) H(+)(in) = a plastoquinol + NADP(+) + n H(+)(out). Its function is as follows. NDH shuttles electrons from NAD(P)H:plastoquinone, via FMN and iron-sulfur (Fe-S) centers, to quinones in the photosynthetic chain and possibly in a chloroplast respiratory chain. The immediate electron acceptor for the enzyme in this species is believed to be plastoquinone. Couples the redox reaction to proton translocation, and thus conserves the redox energy in a proton gradient. The chain is NAD(P)H-quinone oxidoreductase subunit I, chloroplastic from Picradeniopsis absinthifolia (Hairyseed bahia).